Here is a 78-residue protein sequence, read N- to C-terminus: Toxin-like protein 10 (78 aa).

The N-terminal stretch at 1-23 is a signal peptide; that stretch reads MKATALLIAVFILFSVFGDMGYC.

Post-translationally, contains 4 disulfide bonds. In terms of tissue distribution, expressed by the venom gland.

It is found in the secreted. The chain is Toxin-like protein 10 from Urodacus yaschenkoi (Inland robust scorpion).